The sequence spans 434 residues: MKVDLSITAVKAREILDSRGNPTVEVEVVVNDEFVGRAAVPSGASTGMFEAVELRDGDKKRYMGKGVLKAVENVNEVIAPEIIGMNALNQVEIDRLMIELDGTENKSKLGANAILGVSLAVAKAAANALGLPLYQYIGGVNAKYLPVPMMNILNGGKHADNSVDLQEFMIMPVGAKSFSEALRMCAETFHQLRNVLKARGYNTTVGDEGGFAPNLKSNEEPLEVIVEAIEKAGYTPGKDIAIALDPATSELYNEEDGKYHFEREGKVRTKEEMVEFWVKLVEKYPIVSIEDGVAEEDWEGWKMLTEALGKKIQLVGDDLFVTNTKRLAKGIELGVANSILIKLNQIGTLTETLEAIEMANRAGYTAVVSHRSGETEDTTIADLVVAVNAGQIKTGAPSRTDRVAKYNQLLRIEEELGSIAVYPGMNAFFNLKKK.

Residue Gln166 coordinates (2R)-2-phosphoglycerate. The Proton donor role is filled by Glu208. The Mg(2+) site is built by Asp245, Glu290, and Asp317. Lys342, Arg371, Ser372, and Lys393 together coordinate (2R)-2-phosphoglycerate. Residue Lys342 is the Proton acceptor of the active site.

The protein belongs to the enolase family. It depends on Mg(2+) as a cofactor.

The protein resides in the cytoplasm. It is found in the secreted. Its subcellular location is the cell surface. It catalyses the reaction (2R)-2-phosphoglycerate = phosphoenolpyruvate + H2O. It participates in carbohydrate degradation; glycolysis; pyruvate from D-glyceraldehyde 3-phosphate: step 4/5. Catalyzes the reversible conversion of 2-phosphoglycerate (2-PG) into phosphoenolpyruvate (PEP). It is essential for the degradation of carbohydrates via glycolysis. In Caldicellulosiruptor saccharolyticus (strain ATCC 43494 / DSM 8903 / Tp8T 6331), this protein is Enolase.